A 231-amino-acid chain; its full sequence is Large ribosomal subunit protein uL1 (231 aa).

Belongs to the universal ribosomal protein uL1 family. Part of the 50S ribosomal subunit.

Binds directly to 23S rRNA. The L1 stalk is quite mobile in the ribosome, and is involved in E site tRNA release. Functionally, protein L1 is also a translational repressor protein, it controls the translation of the L11 operon by binding to its mRNA. This is Large ribosomal subunit protein uL1 from Acinetobacter baumannii (strain AB0057).